A 726-amino-acid chain; its full sequence is Dipeptidyl-peptidase 5 (726 aa).

The first 19 residues, 1–19, serve as a signal peptide directing secretion; sequence MAAAKWLIASLAFASSGLA. N-linked (GlcNAc...) asparagine glycans are attached at residues Asn-96 and Asn-252. A disordered region spans residues 269-291; it reads AEPINKRNGPRTPQGIEGASSSP. The active-site Charge relay system is the Ser-558. N-linked (GlcNAc...) asparagine glycosylation is found at Asn-605 and Asn-638. Residues Asp-641 and His-673 each act as charge relay system in the active site. An N-linked (GlcNAc...) asparagine glycan is attached at Asn-699.

The protein belongs to the peptidase S9C family.

It is found in the secreted. In Trichophyton schoenleinii, this protein is Dipeptidyl-peptidase 5 (DPPV).